The sequence spans 282 residues: Elongation factor Ts (282 aa).

The involved in Mg(2+) ion dislocation from EF-Tu stretch occupies residues 79–82; sequence TDFV.

The protein belongs to the EF-Ts family.

The protein resides in the cytoplasm. In terms of biological role, associates with the EF-Tu.GDP complex and induces the exchange of GDP to GTP. It remains bound to the aminoacyl-tRNA.EF-Tu.GTP complex up to the GTP hydrolysis stage on the ribosome. The polypeptide is Elongation factor Ts (Shewanella sediminis (strain HAW-EB3)).